A 191-amino-acid chain; its full sequence is Chromobox protein homolog 5 (191 aa).

4 positions are modified to phosphoserine: serine 11, serine 12, serine 13, and serine 14. One can recognise a Chromo 1 domain in the interval 20–78 (YVVEKVLDRRVVKGQVEYLLKWKGFSEEHNTWEPEKNLDCPELISEFMKKYKKMKEGEN). A Glycyl lysine isopeptide (Lys-Gly) (interchain with G-Cter in SUMO2) cross-link involves residue lysine 32. N6-acetyllysine is present on lysine 40. A disordered region spans residues 70-117 (YKKMKEGENNKPREKSESNKRKSNFSNSADDIKSKKKREQSNDIARGF). Basic and acidic residues predominate over residues 73-89 (MKEGENNKPREKSESNK). Lysine 91 is covalently cross-linked (Glycyl lysine isopeptide (Lys-Gly) (interchain with G-Cter in SUMO2)). Phosphoserine occurs at positions 92, 95, and 97. Glycyl lysine isopeptide (Lys-Gly) (interchain with G-Cter in SUMO2) cross-links involve residues lysine 102, lysine 106, lysine 154, and lysine 184. The Chromo 2; shadow subtype domain occupies 121–179 (LEPEKIIGATDSCGDLMFLMKWKDTDEADLVLAKEANVKCPQIVIAFYEERLTWHAYPE).

Homodimer. Interacts with histone H3 methylated at 'Lys-9'. Interacts (via Chromo 2; shadow subtype domain) with the MIS12 complex subunit NSL1; the interaction is direct, involves dimeric CBX5, and occurs during interphase. Interacts with POGZ; POGZ and PXVXL motif-containing proteins such as INCENP and TRIM28 compete for interaction with CBX5. Interacts with LRIF1 (via PxVxL motif). Interacts with INCENP. Interacts with TRIM24. Interacts (via the chromoshadow domain) with ATRX; the interaction is direct. Interacts (via the chromoshadow domain) with CHAF1A; the interaction is direct. Interacts (via the chromoshadow domain) with LBR; the interaction is direct. Interacts (via the chromoshadow domain) with NIPBL; the interaction is direct. Interacts (via the chromoshadow domain) with SP100; the interaction is direct. Interacts (via the chromoshadow domain) with STAM2; the interaction is direct. Interacts (via the chromoshadow domain) with TRIM28; the interaction is direct. Interacts (via the chromoshadow domain) with CBX3; the interaction is direct. Interacts with PRR14 (via N-terminus). Interacts with RRP1B. Interacts with HNRNPU (via C-terminus); this interaction is, at least in part, RNA-dependent. Interacts with ZNF263; recruited to the SIX3 promoter along with other proteins involved in chromatin modification and transcriptional corepression where it contributes to transcriptional repression. Interacts with AURKB during mitosis. Interacts with CHAMP1. Interacts with BAHD1. Interacts with HP1BP3. Interacts with CHD3. Interacts with CHD4. Interacts with SMYD5. Interacts with KMT5B. Interacts with KMT5C. In terms of assembly, (Microbial infection) Interacts with JC virus agnoprotein; this interaction induces the dissociation of CBX5 from LBR, resulting in destabilization of the nuclear envelope. In terms of processing, phosphorylation of HP1 and LBR may be responsible for some of the alterations in chromatin organization and nuclear structure which occur at various times during the cell cycle. Phosphorylated during interphase and possibly hyper-phosphorylated during mitosis. Post-translationally, ubiquitinated.

The protein resides in the nucleus. It is found in the chromosome. Its subcellular location is the centromere. Functionally, component of heterochromatin that recognizes and binds histone H3 tails methylated at 'Lys-9' (H3K9me), leading to epigenetic repression. In contrast, it is excluded from chromatin when 'Tyr-41' of histone H3 is phosphorylated (H3Y41ph). May contribute to the association of heterochromatin with the inner nuclear membrane by interactions with the lamin-B receptor (LBR). Involved in the formation of kinetochore through interaction with the MIS12 complex subunit NSL1. Required for the formation of the inner centromere. This Homo sapiens (Human) protein is Chromobox protein homolog 5 (CBX5).